A 439-amino-acid chain; its full sequence is Serine hydroxymethyltransferase (439 aa).

Residues 1-20 are disordered; the sequence is MNAPHRDETTASHRDDGFFT. (6S)-5,6,7,8-tetrahydrofolate is bound by residues L136 and 140-142; that span reads GHL. N6-(pyridoxal phosphate)lysine is present on K245.

This sequence belongs to the SHMT family. Homodimer. Pyridoxal 5'-phosphate serves as cofactor.

It is found in the cytoplasm. The catalysed reaction is (6R)-5,10-methylene-5,6,7,8-tetrahydrofolate + glycine + H2O = (6S)-5,6,7,8-tetrahydrofolate + L-serine. The protein operates within one-carbon metabolism; tetrahydrofolate interconversion. Its pathway is amino-acid biosynthesis; glycine biosynthesis; glycine from L-serine: step 1/1. In terms of biological role, catalyzes the reversible interconversion of serine and glycine with tetrahydrofolate (THF) serving as the one-carbon carrier. This reaction serves as the major source of one-carbon groups required for the biosynthesis of purines, thymidylate, methionine, and other important biomolecules. Also exhibits THF-independent aldolase activity toward beta-hydroxyamino acids, producing glycine and aldehydes, via a retro-aldol mechanism. The chain is Serine hydroxymethyltransferase from Jannaschia sp. (strain CCS1).